The primary structure comprises 137 residues: uncharacterized protein (137 aa).

A run of 2 helical transmembrane segments spans residues 36-52 (LAPP…PFVL) and 113-129 (FYGY…IFCF).

The protein localises to the membrane. This is an uncharacterized protein from Saccharomyces cerevisiae (strain ATCC 204508 / S288c) (Baker's yeast).